The primary structure comprises 493 residues: ATP synthase subunit beta, chloroplastic (493 aa).

G170–T177 is an ATP binding site.

The protein belongs to the ATPase alpha/beta chains family. As to quaternary structure, F-type ATPases have 2 components, CF(1) - the catalytic core - and CF(0) - the membrane proton channel. CF(1) has five subunits: alpha(3), beta(3), gamma(1), delta(1), epsilon(1). CF(0) has four main subunits: a(1), b(1), b'(1) and c(9-12).

Its subcellular location is the plastid. It is found in the chloroplast thylakoid membrane. It carries out the reaction ATP + H2O + 4 H(+)(in) = ADP + phosphate + 5 H(+)(out). Its function is as follows. Produces ATP from ADP in the presence of a proton gradient across the membrane. The catalytic sites are hosted primarily by the beta subunits. This is ATP synthase subunit beta, chloroplastic from Lachenalia pusilla (Cape cowslips).